A 259-amino-acid chain; its full sequence is MSRRRQIYEGKAKILYEGPEPGTIIQYFKDDATAFNAQKKGMISGKGVINNRVSEHIFTLLAGIGIPTHFIRRLNMREQLVKQVEIIPIEVVIRNVAAGSLSKRLGIEEGTPLPRTIIEYYYKDDALNDPMVADEHIACFGWATQEEMHDIADMAIRVNDFMSGLFAAINIRLVDFKLEFGRVWENDYSRVLLADEISPDGCRLWDMVTNEKLDKDRFRQDLGGEVEAYQEIARRLGLLPVEPDTEVLDLESHRKNRGL.

The protein belongs to the SAICAR synthetase family.

The catalysed reaction is 5-amino-1-(5-phospho-D-ribosyl)imidazole-4-carboxylate + L-aspartate + ATP = (2S)-2-[5-amino-1-(5-phospho-beta-D-ribosyl)imidazole-4-carboxamido]succinate + ADP + phosphate + 2 H(+). The protein operates within purine metabolism; IMP biosynthesis via de novo pathway; 5-amino-1-(5-phospho-D-ribosyl)imidazole-4-carboxamide from 5-amino-1-(5-phospho-D-ribosyl)imidazole-4-carboxylate: step 1/2. The chain is Phosphoribosylaminoimidazole-succinocarboxamide synthase from Zymomonas mobilis subsp. mobilis (strain ATCC 31821 / ZM4 / CP4).